The sequence spans 380 residues: Chromo domain-containing protein 2 (380 aa).

2 disordered regions span residues Ile14–Gly58 and Lys100–Asn156. Residues Asn33–Trp52 show a composition bias toward polar residues. The segment covering Glu108–Ser119 has biased composition (acidic residues). Over residues Ser121–Lys140 the composition is skewed to low complexity. Positions Phe176 to Ser238 constitute a Chromo domain. Residues Ser250 to Arg273 form a disordered region.

Its subcellular location is the nucleus. Functionally, component of the kinetochore which plays a role in stabilizing microtubules and so allowing accurate chromosome segregation. This is Chromo domain-containing protein 2 (chp2) from Schizosaccharomyces pombe (strain 972 / ATCC 24843) (Fission yeast).